A 110-amino-acid chain; its full sequence is Minor capsid protein VP2 (110 aa).

The protein belongs to the vesivirus VP2 protein family. As to quaternary structure, homooligomer. The portal-like structure consists in 12 copies of VP2. Interacts with capsid protein VP1.

It is found in the virion. The protein resides in the host cytoplasm. Functionally, minor structural protein that forms a portal-like structure at a unique three-fold axis of symmetry, following binding to the host receptor. The channel formed by VP2 may allow the delivery of the viral genome through the host endosomal membrane. This chain is Minor capsid protein VP2, found in Otariidae (fur seals &amp; sea lions).